Here is a 123-residue protein sequence, read N- to C-terminus: NADH-quinone oxidoreductase subunit A (123 aa).

3 helical membrane-spanning segments follow: residues Leu-6–Ile-26, Val-66–Val-86, and Trp-93–Ile-113.

The protein belongs to the complex I subunit 3 family. As to quaternary structure, NDH-1 is composed of 14 different subunits. Subunits NuoA, H, J, K, L, M, N constitute the membrane sector of the complex.

The protein localises to the cell inner membrane. The enzyme catalyses a quinone + NADH + 5 H(+)(in) = a quinol + NAD(+) + 4 H(+)(out). Its function is as follows. NDH-1 shuttles electrons from NADH, via FMN and iron-sulfur (Fe-S) centers, to quinones in the respiratory chain. The immediate electron acceptor for the enzyme in this species is believed to be ubiquinone. Couples the redox reaction to proton translocation (for every two electrons transferred, four hydrogen ions are translocated across the cytoplasmic membrane), and thus conserves the redox energy in a proton gradient. In Myxococcus xanthus (strain DK1622), this protein is NADH-quinone oxidoreductase subunit A.